The primary structure comprises 66 residues: Large ribosomal subunit protein bL35 (66 aa).

Basic residues predominate over residues 1-26 (MPKMKTHRGAAKRVKRTASGKLKRSR). The segment at 1-49 (MPKMKTHRGAAKRVKRTASGKLKRSRAFTSHLFANKSTKQKRKLRKASL) is disordered.

Belongs to the bacterial ribosomal protein bL35 family.

This is Large ribosomal subunit protein bL35 from Staphylococcus carnosus (strain TM300).